We begin with the raw amino-acid sequence, 113 residues long: Large ribosomal subunit protein bL19 (113 aa).

It belongs to the bacterial ribosomal protein bL19 family.

This protein is located at the 30S-50S ribosomal subunit interface and may play a role in the structure and function of the aminoacyl-tRNA binding site. This chain is Large ribosomal subunit protein bL19, found in Mycobacterium leprae (strain Br4923).